A 148-amino-acid polypeptide reads, in one-letter code: MQVLIKRNGMKRSKFHRERKEKLATMPVYEARAVAKFVRISPRKARSVANSIKGKNVSEAFTILEFSPKKAARLIKNVLKSAVANAVNNHGLNEENLYVYTCYVNDGPRMKRIWPRGRGSADIIQKRMSHITVIVRDKEAEKAAKEEK.

The protein belongs to the universal ribosomal protein uL22 family. As to quaternary structure, part of the 50S ribosomal subunit.

Functionally, this protein binds specifically to 23S rRNA; its binding is stimulated by other ribosomal proteins, e.g. L4, L17, and L20. It is important during the early stages of 50S assembly. It makes multiple contacts with different domains of the 23S rRNA in the assembled 50S subunit and ribosome. The globular domain of the protein is located near the polypeptide exit tunnel on the outside of the subunit, while an extended beta-hairpin is found that lines the wall of the exit tunnel in the center of the 70S ribosome. In Thermosipho africanus (strain TCF52B), this protein is Large ribosomal subunit protein uL22.